The primary structure comprises 444 residues: tRNA (guanine-N(7)-)-methyltransferase non-catalytic subunit TRM82 (444 aa).

7 WD repeats span residues 1–47 (MSVI…WSDD), 48–99 (FDKI…LGAP), 100–147 (PIYS…KRFC), 148–192 (FSKR…EPIL), 193–237 (GHVS…DKWL), 238–279 (FGHK…STFD), and 308–354 (FAVS…ITFP). Residues 55–92 (RNTTAKEQQGQSSENENENKKLKSNKGDSIKRTAAKVP) are disordered. The segment covering 71–85 (NENKKLKSNKGDSIK) has biased composition (basic and acidic residues). Ser93 is subject to Phosphoserine.

This sequence belongs to the WD repeat TRM82 family. Forms a heterodimer with the catalytic subunit TRM8.

Its subcellular location is the nucleus. It participates in tRNA modification; N(7)-methylguanine-tRNA biosynthesis. Required for the formation of N(7)-methylguanine at position 46 (m7G46) in tRNA, a modification required to maintain stability of tRNAs; its absence resulting in tRNA decay. In the complex, it is required to stabilize and induce conformational changes of the catalytic subunit. The protein is tRNA (guanine-N(7)-)-methyltransferase non-catalytic subunit TRM82 of Saccharomyces cerevisiae (strain ATCC 204508 / S288c) (Baker's yeast).